The primary structure comprises 92 residues: Large ribosomal subunit protein bL25 (92 aa).

It belongs to the bacterial ribosomal protein bL25 family. As to quaternary structure, part of the 50S ribosomal subunit; part of the 5S rRNA/L5/L18/L25 subcomplex. Contacts the 5S rRNA. Binds to the 5S rRNA independently of L5 and L18.

Functionally, this is one of the proteins that binds to the 5S RNA in the ribosome where it forms part of the central protuberance. The polypeptide is Large ribosomal subunit protein bL25 (Vibrio campbellii (strain ATCC BAA-1116)).